A 365-amino-acid polypeptide reads, in one-letter code: Alanine racemase (365 aa).

The active-site Proton acceptor; specific for D-alanine is lysine 32. The residue at position 32 (lysine 32) is an N6-(pyridoxal phosphate)lysine. Residue arginine 128 participates in substrate binding. Tyrosine 257 (proton acceptor; specific for L-alanine) is an active-site residue. Methionine 305 lines the substrate pocket.

Belongs to the alanine racemase family. It depends on pyridoxal 5'-phosphate as a cofactor.

It carries out the reaction L-alanine = D-alanine. It participates in amino-acid biosynthesis; D-alanine biosynthesis; D-alanine from L-alanine: step 1/1. Its function is as follows. Catalyzes the interconversion of L-alanine and D-alanine. May also act on other amino acids. The polypeptide is Alanine racemase (alr) (Francisella tularensis subsp. holarctica (strain LVS)).